The following is a 196-amino-acid chain: dTTP/UTP pyrophosphatase (196 aa).

Asp72 acts as the Proton acceptor in catalysis.

This sequence belongs to the Maf family. YhdE subfamily. It depends on a divalent metal cation as a cofactor.

Its subcellular location is the cytoplasm. The enzyme catalyses dTTP + H2O = dTMP + diphosphate + H(+). It carries out the reaction UTP + H2O = UMP + diphosphate + H(+). Its function is as follows. Nucleoside triphosphate pyrophosphatase that hydrolyzes dTTP and UTP. May have a dual role in cell division arrest and in preventing the incorporation of modified nucleotides into cellular nucleic acids. The chain is dTTP/UTP pyrophosphatase from Chlamydia caviae (strain ATCC VR-813 / DSM 19441 / 03DC25 / GPIC) (Chlamydophila caviae).